Consider the following 348-residue polypeptide: MFLQRCMSFLQCIFAAVLAWIGVRGQQVHGASQFSSTGKVNPATIKVVNNVISQASATPSSVNYHFTRQCNYKCGFCFHTAKTSFVLPIEEAKRGLQLLKESGLEKINFSGGEPFIHDRGDFLGKLVQYCKHDLQLPSVSIVSNGSMIREKWFQTYGEYLDILAISCDSFDEDTNQTIGRAQGRKSHLDNLFKVRDWCRKYKVAFKINSVINTFNVDEDMRENITELNPVRWKVFQCLLIDGENAGENSLREAERFLISDQQFQDFLERHSSISCLVPESNQKMRDSYLILDEYMRFLDCREGRKDPSKSILDVGVEEAIQFSGFDEKMFLKRGGKYVWSKADMRLEW.

The region spanning 56-276 is the Radical SAM core domain; that stretch reads SATPSSVNYH…LERHSSISCL (221 aa). Positions 70, 74, and 77 each coordinate [4Fe-4S] cluster.

It belongs to the radical SAM superfamily. RSAD2 family. It depends on [4Fe-4S] cluster as a cofactor. Expressed at low levels in spleen and head kidney.

It localises to the endoplasmic reticulum membrane. Its function is as follows. Interferon-inducible iron-sulfur (4FE-4S) cluster-binding antiviral protein which plays a major role in the cell antiviral state induced by type I and type II interferon. This Oncorhynchus mykiss (Rainbow trout) protein is S-adenosylmethionine-dependent nucleotide dehydratase RSAD2.